Reading from the N-terminus, the 163-residue chain is Nitrogen regulatory protein (163 aa).

The 145-residue stretch at 12 to 156 (SVLNRECTRS…EELYQIITDT (145 aa)) folds into the PTS EIIA type-2 domain. Residue His73 is the Tele-phosphohistidine intermediate of the active site.

The protein resides in the cytoplasm. In terms of biological role, seems to have a role in regulating nitrogen assimilation. The polypeptide is Nitrogen regulatory protein (ptsN) (Escherichia coli (strain K12)).